The primary structure comprises 757 residues: Endonuclease MutS2 (757 aa).

321–328 (GPNMGGKT) is a binding site for ATP. The Smr domain maps to 681 to 756 (IDIRGMTVEE…GTGVTVVEVK (76 aa)).

The protein belongs to the DNA mismatch repair MutS family. MutS2 subfamily. Homodimer. Binds to stalled ribosomes, contacting rRNA.

Its function is as follows. Endonuclease that is involved in the suppression of homologous recombination and thus may have a key role in the control of bacterial genetic diversity. Acts as a ribosome collision sensor, splitting the ribosome into its 2 subunits. Detects stalled/collided 70S ribosomes which it binds and splits by an ATP-hydrolysis driven conformational change. Acts upstream of the ribosome quality control system (RQC), a ribosome-associated complex that mediates the extraction of incompletely synthesized nascent chains from stalled ribosomes and their subsequent degradation. Probably generates substrates for RQC. The sequence is that of Endonuclease MutS2 from Thermotoga sp. (strain RQ2).